The chain runs to 327 residues: E3 ubiquitin-protein ligase ZNRF4 (327 aa).

Residues 1–28 form the signal peptide; that stretch reads MARFAWTRVAPVALVTFWLVLSLSPTDA. Over 29 to 150 the chain is Lumenal; sequence QVNLSSVDFL…EPCPDPECHP (122 aa). A glycan (N-linked (GlcNAc...) asparagine) is linked at Asn31. Residues 151–171 form a helical membrane-spanning segment; it reads VVVASWALARALALAASTLFV. Over 172–327 the chain is Cytoplasmic; sequence LRQLWPWVRG…AQSEATSELS (156 aa). An RING-type; atypical zinc finger spans residues 209–252; it reads CAICLDDYEEGERLKILPCAHAYHCRCIDPWFSRAAQRSCPLCK. The span at 256 to 265 shows a compositional bias: polar residues; the sequence is ASTHDGSTDG. Positions 256–279 are disordered; it reads ASTHDGSTDGSVGGEEPPLPGHRP.

As to quaternary structure, interacts with CANX. Expressed exclusively in spermatids (at protein level).

Its subcellular location is the endoplasmic reticulum membrane. The enzyme catalyses S-ubiquitinyl-[E2 ubiquitin-conjugating enzyme]-L-cysteine + [acceptor protein]-L-lysine = [E2 ubiquitin-conjugating enzyme]-L-cysteine + N(6)-ubiquitinyl-[acceptor protein]-L-lysine.. The protein operates within protein modification; protein ubiquitination. E3 ubiquitin-protein ligase that acts as a negative regulator of NOD2 signaling by mediating ubiquitination and degradation of RIPK2. Also catalyzes ubiquitination and proteasomal degradation of CANX within the endoplasmic reticulum. Could have a role in spermatogenesis. The sequence is that of E3 ubiquitin-protein ligase ZNRF4 from Mus musculus (Mouse).